The sequence spans 532 residues: MSSISHQAAPTRAQHTNSYVQLARQLVTSVDNDPWGDVPPSVYETARVTSWAPWLEGHERRLAWLLERQSAAGSWGEGPTPYRLLPTLSVTEALLSTLRQNTAAGVSRERLAAAVDNGLAALRDLSGTGGWPDTAAIEILAPDLVVLINDHLDQPEVAALPRLGPWARGQRLAQPHGFQAALPDRVAERCQVAGGVPLKLHHTFEGVARRLPRMVPGVPGGLLGSSPAATAAWLATGPDEGRDQAVTALTAVAERYDGLFPEATPISVFERLWISVALARPGLPAACVPTIRAWAAEIYDATGVRGAPGLLPDTDDTAMAVLASALAGSPRDPSPLSAFEAGDHYDCYVGEDTGSSTANAHALQALTAWLSHRPATGDALQARRDLTRDWLLAQQESDGAWRDKWHASPYYATERCVTALSGHTGPTTRDAIRSAADWVLDAQSDDGSWGVWGGTAEETAYAVNILLNSPDHTGTPEATQALKLAENVLREAVHSSGHHHPALWHDKTLYAPQAMAQAEVIAALELLQARRP.

The DXDDTA motif signature appears at 313 to 318; sequence DTDDTA. Positions 443–449 match the QXXDGSW motif motif; sequence QSDDGSW.

Belongs to the terpene synthase family. Mg(2+) serves as cofactor.

It catalyses the reaction (2E,6E,10E)-geranylgeranyl diphosphate = (+)-copalyl diphosphate. Functionally, involved in the biosynthesis of the mercapturic acid derivative diterpene cyslabdan A, a potentiator of the beta-lactam antibiotic imipenem. Catalyzes the conversion of geranylgeranyl diphosphate (GGDP) into (+)-copalyl diphosphate. The sequence is that of Copalyl diphosphate synthase from Streptomyces cyslabdanicus.